Consider the following 1370-residue polypeptide: DNA-directed RNA polymerase subunit beta (1370 aa).

This sequence belongs to the RNA polymerase beta chain family. As to quaternary structure, the RNAP catalytic core consists of 2 alpha, 1 beta, 1 beta' and 1 omega subunit. When a sigma factor is associated with the core the holoenzyme is formed, which can initiate transcription.

The catalysed reaction is RNA(n) + a ribonucleoside 5'-triphosphate = RNA(n+1) + diphosphate. Functionally, DNA-dependent RNA polymerase catalyzes the transcription of DNA into RNA using the four ribonucleoside triphosphates as substrates. This Polaromonas naphthalenivorans (strain CJ2) protein is DNA-directed RNA polymerase subunit beta.